The following is a 95-amino-acid chain: MHDADARLTAWVLGTVQGVGFRWWVYSQAKELALAGSASNLVDGRVCVVAEGPKHLCEELLRRLSAHDHSGRPGRVDTVVERWSSPKGEVGFRTR.

An Acylphosphatase-like domain is found at 7–95 (RLTAWVLGTV…PKGEVGFRTR (89 aa)). Residues Arg-22 and Asn-40 contribute to the active site.

Belongs to the acylphosphatase family.

It carries out the reaction an acyl phosphate + H2O = a carboxylate + phosphate + H(+). This is Acylphosphatase (acyP) from Corynebacterium diphtheriae (strain ATCC 700971 / NCTC 13129 / Biotype gravis).